Consider the following 723-residue polypeptide: Tripartite motif-containing protein 42 (723 aa).

The RING-type zinc-finger motif lies at C146–D192. 2 consecutive B box-type zinc fingers follow at residues P235–T280 and Q285–L326. C290, H293, C313, and H318 together coordinate Zn(2+). A coiled-coil region spans residues K382 to K407. Positions L434–T492 constitute a COS domain. A Fibronectin type-III domain is found at T603–G701.

The protein belongs to the TRIM/RBCC family.

The chain is Tripartite motif-containing protein 42 (TRIM42) from Homo sapiens (Human).